Here is a 93-residue protein sequence, read N- to C-terminus: Small ribosomal subunit protein bS20 (93 aa).

Residues 1–11 (MPQHKSAEKRV) show a composition bias toward basic and acidic residues. Residues 1 to 23 (MPQHKSAEKRVRQSKRRNARNRV) are disordered. Over residues 12-23 (RQSKRRNARNRV) the composition is skewed to basic residues.

This sequence belongs to the bacterial ribosomal protein bS20 family.

In terms of biological role, binds directly to 16S ribosomal RNA. In Chloroherpeton thalassium (strain ATCC 35110 / GB-78), this protein is Small ribosomal subunit protein bS20.